Consider the following 158-residue polypeptide: 2-C-methyl-D-erythritol 2,4-cyclodiphosphate synthase (158 aa).

Positions 9 and 11 each coordinate a divalent metal cation. 4-CDP-2-C-methyl-D-erythritol 2-phosphate-binding positions include Asp-9–His-11 and His-35–Ser-36. His-43 serves as a coordination point for a divalent metal cation. 4-CDP-2-C-methyl-D-erythritol 2-phosphate is bound by residues Asp-57–Gly-59, Phe-62–Asp-66, Thr-133–Glu-136, Phe-140, and Arg-143.

This sequence belongs to the IspF family. In terms of assembly, homotrimer. Requires a divalent metal cation as cofactor.

The enzyme catalyses 4-CDP-2-C-methyl-D-erythritol 2-phosphate = 2-C-methyl-D-erythritol 2,4-cyclic diphosphate + CMP. Its pathway is isoprenoid biosynthesis; isopentenyl diphosphate biosynthesis via DXP pathway; isopentenyl diphosphate from 1-deoxy-D-xylulose 5-phosphate: step 4/6. In terms of biological role, involved in the biosynthesis of isopentenyl diphosphate (IPP) and dimethylallyl diphosphate (DMAPP), two major building blocks of isoprenoid compounds. Catalyzes the conversion of 4-diphosphocytidyl-2-C-methyl-D-erythritol 2-phosphate (CDP-ME2P) to 2-C-methyl-D-erythritol 2,4-cyclodiphosphate (ME-CPP) with a corresponding release of cytidine 5-monophosphate (CMP). The chain is 2-C-methyl-D-erythritol 2,4-cyclodiphosphate synthase from Pasteurella multocida (strain Pm70).